A 154-amino-acid polypeptide reads, in one-letter code: Superoxide dismutase [Cu-Zn] (154 aa).

The Cu cation site is built by His-47, His-49, and His-64. A disulfide bond links Cys-58 and Cys-147. 4 residues coordinate Zn(2+): His-64, His-72, His-81, and Asp-84. Residue His-121 coordinates Cu cation. Arg-144 serves as a coordination point for substrate.

Belongs to the Cu-Zn superoxide dismutase family. In terms of assembly, homodimer. Cu cation is required as a cofactor. It depends on Zn(2+) as a cofactor.

Its subcellular location is the cytoplasm. The catalysed reaction is 2 superoxide + 2 H(+) = H2O2 + O2. In terms of biological role, destroys radicals which are normally produced within the cells and which are toxic to biological systems. This is Superoxide dismutase [Cu-Zn] (sodC) from Aspergillus fumigatus (strain ATCC MYA-4609 / CBS 101355 / FGSC A1100 / Af293) (Neosartorya fumigata).